We begin with the raw amino-acid sequence, 104 residues long: A-type ATP synthase subunit F (104 aa).

The protein belongs to the V-ATPase F subunit family. In terms of assembly, has multiple subunits with at least A(3), B(3), C, D, E, F, H, I and proteolipid K(x).

It is found in the cell membrane. Its function is as follows. Component of the A-type ATP synthase that produces ATP from ADP in the presence of a proton gradient across the membrane. The polypeptide is A-type ATP synthase subunit F (Thermoplasma acidophilum (strain ATCC 25905 / DSM 1728 / JCM 9062 / NBRC 15155 / AMRC-C165)).